A 165-amino-acid chain; its full sequence is V-type proton ATPase 16 kDa proteolipid subunit (165 aa).

Over 1–12 the chain is Lumenal; it reads MSTVFNGDETAP. A helical transmembrane segment spans residues 13-33; that stretch reads FFGFLGAAAALVFSCMGAAYG. Topologically, residues 34–55 are cytoplasmic; that stretch reads TAKSGVGVASMGVMRPELVMKS. Residues 56–76 traverse the membrane as a helical segment; sequence IVPVVMAGVLGIYGLIIAVII. At 77-95 the chain is on the lumenal side; that stretch reads STGINPKAKSYYLFDGYAH. A helical transmembrane segment spans residues 96 to 117; it reads LSSGLACGLAGLSAGMAIGIVG. The Cytoplasmic segment spans residues 118 to 129; sequence DAGVRANAQQPK. A helical transmembrane segment spans residues 130-155; it reads LFVGMILILIFAEALALYGLIVGIIL. The Lumenal portion of the chain corresponds to 156 to 165; sequence SSRAGQSRAD.

This sequence belongs to the V-ATPase proteolipid subunit family. V-ATPase is a heteromultimeric enzyme composed of a peripheral catalytic V1 complex (main components: subunits A, B, C, D, E, and F) attached to an integral membrane V0 proton pore complex (main component: the proteolipid protein; which is present as a hexamer that forms the proton-conducting pore).

The protein resides in the vacuole membrane. Proton-conducting pore forming subunit of the membrane integral V0 complex of vacuolar ATPase. V-ATPase is responsible for acidifying a variety of intracellular compartments in eukaryotic cells. This is V-type proton ATPase 16 kDa proteolipid subunit (VMAC1) from Mesembryanthemum crystallinum (Common ice plant).